The sequence spans 418 residues: Translation initiation factor 2 subunit gamma (418 aa).

A tr-type G domain is found at 7-206 (QPEVNIGVVG…GIQKYIPTPQ (200 aa)). The interval 16–23 (GHVDHGKT) is G1. Mg(2+) contacts are provided by D19, T23, G44, and T46. GTP is bound at residue 19–24 (DHGKTT). A G2 region spans residues 44 to 48 (GMTIK). Positions 59, 62, 74, and 77 each coordinate Zn(2+). Residues 93–96 (DAPG) are G3. GTP is bound by residues 149 to 152 (NKVD) and 184 to 186 (SAL). The segment at 149–152 (NKVD) is G4. The G5 stretch occupies residues 184–186 (SAL).

Belongs to the TRAFAC class translation factor GTPase superfamily. Classic translation factor GTPase family. EIF2G subfamily. In terms of assembly, heterotrimer composed of an alpha, a beta and a gamma chain. Mg(2+) serves as cofactor.

The enzyme catalyses GTP + H2O = GDP + phosphate + H(+). Functionally, eIF-2 functions in the early steps of protein synthesis by forming a ternary complex with GTP and initiator tRNA. The chain is Translation initiation factor 2 subunit gamma from Sulfurisphaera tokodaii (strain DSM 16993 / JCM 10545 / NBRC 100140 / 7) (Sulfolobus tokodaii).